The chain runs to 219 residues: Vesicle-associated membrane protein 712 (219 aa).

The Cytoplasmic segment spans residues 1-189 (MSILYALVAR…NNTVWWRNCK (189 aa)). One can recognise a Longin domain in the interval 7–111 (LVARGTVVLA…AMNDEFSRVL (105 aa)). The 61-residue stretch at 126-186 (TISRIKGEMN…RRFNNTVWWR (61 aa)) folds into the v-SNARE coiled-coil homology domain. The helical; Anchor for type IV membrane protein transmembrane segment at 190 to 210 (LTLLLILVLLVIIYIGVAFAC) threads the bilayer. Topologically, residues 211–219 (HGPTLPSCV) are vesicular.

It belongs to the synaptobrevin family. As to expression, expressed in flowers, leaves, stems and roots.

The protein resides in the vacuole membrane. It is found in the prevacuolar compartment membrane. Functionally, involved in the targeting and/or fusion of transport vesicles to their target membrane. The chain is Vesicle-associated membrane protein 712 from Arabidopsis thaliana (Mouse-ear cress).